The chain runs to 601 residues: Sodium-dependent phosphate transport protein 2C (601 aa).

At 1–75 the chain is on the cytoplasmic side; that stretch reads MPNSLAGGQV…RRVVSSFLKA (75 aa). A Phosphoserine modification is found at Ser4. Residues 76–96 form a helical membrane-spanning segment; sequence CGLLGSLYFFICSLDILSSAF. The Extracellular segment spans residues 97 to 110; that stretch reads QLLGSKMAGDIFKD. The helical transmembrane segment at 111–131 threads the bilayer; it reads NVVLSNPVAGLVIGVLVTVLV. Over 132 to 187 the chain is Cytoplasmic; the sequence is QSSSTSSSIVVSMVASKLLTVQVSVPIIMGVNVGTSITSTLVSMAQSGDRDEFQRA. The helical transmembrane segment at 188-208 threads the bilayer; the sequence is FSGSAVHGIFNWLTVLVLLPL. The Extracellular portion of the chain corresponds to 209–324; the sequence is ESATAALERL…FAGSKLTDLA (116 aa). N-linked (GlcNAc...) asparagine glycosylation is found at Asn264, Asn267, and Asn299. Cys275 and Cys311 are joined by a disulfide. A helical transmembrane segment spans residues 325 to 345; the sequence is VGFILLAGSLLVLCVCLVLIV. The Cytoplasmic segment spans residues 346–369; it reads KLLNSVLKGRIAQAVKTVINADFP. The helical transmembrane segment at 370-390 threads the bilayer; the sequence is FPFGWLSGYLAILVGAGLTFL. At 391–441 the chain is on the extracellular side; it reads LQSSSVFTAAIVPLMGVGVIDLERAYPLFLGSNIGTTTTALLAALASPADM. A helical membrane pass occupies residues 442 to 462; it reads LIFAVQVALIHFFFNLAGILL. Residues 463–487 lie on the Cytoplasmic side of the membrane; it reads WYLVPVLRLPIPLAKRFGNLTAQYR. The helical transmembrane segment at 488-508 threads the bilayer; the sequence is WVAIVYLLLTFLLLPLAAFGL. The Extracellular portion of the chain corresponds to 509 to 512; the sequence is SLAG. A helical transmembrane segment spans residues 513-533; sequence GTVLAAVGGPLVGLVLLIILV. The Cytoplasmic portion of the chain corresponds to 534–601; the sequence is NVLQQHRPSW…NPQVIASQQL (68 aa).

This sequence belongs to the SLC34A transporter family. Expressed only in the kidney.

The protein resides in the apical cell membrane. It carries out the reaction 2 Na(+)(out) + phosphate(out) = 2 Na(+)(in) + phosphate(in). Involved in actively transporting phosphate into cells via Na(+) cotransport in the renal brush border membrane. The cotransport has a Na(+):Pi stoichiometry of 2:1 and is electroneutral. The protein is Sodium-dependent phosphate transport protein 2C (Slc34a3) of Mus musculus (Mouse).